We begin with the raw amino-acid sequence, 191 residues long: Crossover junction endodeoxyribonuclease RuvC (191 aa).

Active-site residues include D7, E67, and D140. Residues D7, E67, and D140 each coordinate Mg(2+).

This sequence belongs to the RuvC family. Homodimer which binds Holliday junction (HJ) DNA. The HJ becomes 2-fold symmetrical on binding to RuvC with unstacked arms; it has a different conformation from HJ DNA in complex with RuvA. In the full resolvosome a probable DNA-RuvA(4)-RuvB(12)-RuvC(2) complex forms which resolves the HJ. Mg(2+) serves as cofactor.

The protein resides in the cytoplasm. The catalysed reaction is Endonucleolytic cleavage at a junction such as a reciprocal single-stranded crossover between two homologous DNA duplexes (Holliday junction).. In terms of biological role, the RuvA-RuvB-RuvC complex processes Holliday junction (HJ) DNA during genetic recombination and DNA repair. Endonuclease that resolves HJ intermediates. Cleaves cruciform DNA by making single-stranded nicks across the HJ at symmetrical positions within the homologous arms, yielding a 5'-phosphate and a 3'-hydroxyl group; requires a central core of homology in the junction. The consensus cleavage sequence is 5'-(A/T)TT(C/G)-3'. Cleavage occurs on the 3'-side of the TT dinucleotide at the point of strand exchange. HJ branch migration catalyzed by RuvA-RuvB allows RuvC to scan DNA until it finds its consensus sequence, where it cleaves and resolves the cruciform DNA. This Pelodictyon phaeoclathratiforme (strain DSM 5477 / BU-1) protein is Crossover junction endodeoxyribonuclease RuvC.